Consider the following 520-residue polypeptide: 2-isopropylmalate synthase (520 aa).

The Pyruvate carboxyltransferase domain occupies 12 to 274 (VVIFDTTLRD…DTGIDTTMLT (263 aa)). Mn(2+) is bound by residues D21, H209, H211, and N245. The interval 398–520 (KLLSLSVIAG…RLHAQHAAVV (123 aa)) is regulatory domain.

It belongs to the alpha-IPM synthase/homocitrate synthase family. LeuA type 1 subfamily. Homodimer. Requires Mn(2+) as cofactor.

The protein localises to the cytoplasm. The catalysed reaction is 3-methyl-2-oxobutanoate + acetyl-CoA + H2O = (2S)-2-isopropylmalate + CoA + H(+). It functions in the pathway amino-acid biosynthesis; L-leucine biosynthesis; L-leucine from 3-methyl-2-oxobutanoate: step 1/4. Catalyzes the condensation of the acetyl group of acetyl-CoA with 3-methyl-2-oxobutanoate (2-ketoisovalerate) to form 3-carboxy-3-hydroxy-4-methylpentanoate (2-isopropylmalate). This Methylorubrum populi (strain ATCC BAA-705 / NCIMB 13946 / BJ001) (Methylobacterium populi) protein is 2-isopropylmalate synthase.